A 408-amino-acid chain; its full sequence is Probable pectate lyase 5 (408 aa).

An N-terminal signal peptide occupies residues 1 to 27 (MRMTLVHLSLSLFSCLLLVLSPTFIAS). The N-linked (GlcNAc...) asparagine glycan is linked to asparagine 45. The Ca(2+) site is built by aspartate 206, aspartate 230, and aspartate 234. Arginine 286 is an active-site residue.

Belongs to the polysaccharide lyase 1 family. It depends on Ca(2+) as a cofactor.

The catalysed reaction is Eliminative cleavage of (1-&gt;4)-alpha-D-galacturonan to give oligosaccharides with 4-deoxy-alpha-D-galact-4-enuronosyl groups at their non-reducing ends.. It participates in glycan metabolism; pectin degradation; 2-dehydro-3-deoxy-D-gluconate from pectin: step 2/5. The sequence is that of Probable pectate lyase 5 from Arabidopsis thaliana (Mouse-ear cress).